Reading from the N-terminus, the 203-residue chain is ATP phosphoribosyltransferase (203 aa).

The protein belongs to the ATP phosphoribosyltransferase family. Short subfamily.

It localises to the cytoplasm. The catalysed reaction is 1-(5-phospho-beta-D-ribosyl)-ATP + diphosphate = 5-phospho-alpha-D-ribose 1-diphosphate + ATP. It participates in amino-acid biosynthesis; L-histidine biosynthesis; L-histidine from 5-phospho-alpha-D-ribose 1-diphosphate: step 1/9. Functionally, catalyzes the condensation of ATP and 5-phosphoribose 1-diphosphate to form N'-(5'-phosphoribosyl)-ATP (PR-ATP). Has a crucial role in the pathway because the rate of histidine biosynthesis seems to be controlled primarily by regulation of HisG enzymatic activity. This is ATP phosphoribosyltransferase from Thermococcus kodakarensis (strain ATCC BAA-918 / JCM 12380 / KOD1) (Pyrococcus kodakaraensis (strain KOD1)).